We begin with the raw amino-acid sequence, 300 residues long: m7GpppN-mRNA hydrolase NUDT17 (300 aa).

The 152-residue stretch at 88-239 folds into the Nudix hydrolase domain; sequence SRGVDVGVAV…KECVQIPADL (152 aa). Positions 127 to 148 match the Nudix box motif; the sequence is GHVELDEKLLDAGLRELLEETG. E142 and E146 together coordinate Mg(2+).

Belongs to the Nudix hydrolase family. It depends on Mg(2+) as a cofactor. The cofactor is Mn(2+).

The catalysed reaction is a 5'-end (N(7)-methyl 5'-triphosphoguanosine)-ribonucleoside in mRNA + H2O = N(7)-methyl-GDP + a 5'-end phospho-ribonucleoside in mRNA + 2 H(+). Its function is as follows. Acts as a decapping enzyme capable of hydrolyzing monomethylated capped RNAs (in vitro). Hydrolyzes monomethylated capped RNA after alpha and beta phosphates to form N(7)-methyl-GDP. Shows low activity towards unmethylated capped RNA. The sequence is that of m7GpppN-mRNA hydrolase NUDT17 (nudt17) from Danio rerio (Zebrafish).